The chain runs to 359 residues: Alanine racemase (359 aa).

Catalysis depends on lysine 35, which acts as the Proton acceptor; specific for D-alanine. Lysine 35 bears the N6-(pyridoxal phosphate)lysine mark. Substrate is bound at residue arginine 130. The active-site Proton acceptor; specific for L-alanine is the tyrosine 255. Methionine 303 is a binding site for substrate.

It belongs to the alanine racemase family. Pyridoxal 5'-phosphate is required as a cofactor.

The enzyme catalyses L-alanine = D-alanine. The protein operates within amino-acid biosynthesis; D-alanine biosynthesis; D-alanine from L-alanine: step 1/1. In terms of biological role, catalyzes the interconversion of L-alanine and D-alanine. May also act on other amino acids. The chain is Alanine racemase (alr) from Janthinobacterium sp. (strain Marseille) (Minibacterium massiliensis).